The primary structure comprises 808 residues: MLFFIKVFMKTILSVLLLFFIFASSFTLVVGLAGCRPDQIQALTQFKNEFDSSDCNQTDYFNGVQCDNKTGVVTKLQLPSGCLHGSMKPNSSLFGLQHLRYLNLSNNNFTSASLPSGFGNLNRLEVLYLSSNGFLGQVPSSFSNLSQLNILDLSHNELTGSFPFVQNLTKLSILVLSYNHFSGTIPSSLLTLPFLSSLDLRENYLTGSIEAPNSSTSSRLEFMYLGNNHFEGQILEPISKLINLKHLDLSFLKTSYPIDLNLFSSFKSLVRLVLSGNSLLATSITSDSKIPLNLENLVLLSCGLIEFPTILKNLTKLEHIDLSNNKIKGKVPEWFWNLPRLRRVNLFNNLFTDLEGSEEVLVNSSVRLLDLAYNHFRGPFPKPPLSINLLSAWNNSFTGNIPLETCNRSSLAILDLSYNNLTGPIPRCLSDFQESLIVVNLRKNNLEGSLPDIFSDGALLRTLDVGYNQLTGKLPRSLLNCSMLRFVSVDHNKIKDTFPFWLKALPDLQALTLRSNKFHGPISPPDRGPLAFPKLRILEISDNNFTGSLPPNYFVNWEASSLQMNEDGRIYMGDYNNPYYIYEDTVDLQYKGLFMEQGKVLTSYATIDFSGNKLEGQIPESIGLLKALIALNLSNNAFTGHIPLSLANVTELESLDLSRNQLSGTIPNGLKTLSFLAYISVAHNQLIGEIPQGTQITGQSKSSFEGNAGLCGLPLQGSCFAPPTPQPKEEDEDEEVLNWKAVVIGYWPGLLLGLIMAHVIASFKPKWLVKIVGPEKRKEDNPVRLFMTLDSRWDSFNNKKNVEQKSDM.

The signal sequence occupies residues 1-31 (MLFFIKVFMKTILSVLLLFFIFASSFTLVVG). Residues 32-740 (LAGCRPDQIQ…DEDEEVLNWK (709 aa)) lie on the Extracellular side of the membrane. N-linked (GlcNAc...) asparagine glycosylation is found at asparagine 56, asparagine 68, asparagine 90, asparagine 103, asparagine 108, asparagine 144, and asparagine 167. LRR repeat units follow at residues 96-120 (LQHL…GFGN), 122-144 (NRLE…SFSN), 145-170 (LSQL…NLTK), 172-192 (SILV…LLTL), 193-218 (PFLS…STSS), 220-241 (LEFM…ISKL), 242-265 (INLK…LFSS), 266-291 (FKSL…SKIP), 293-314 (NLEN…LKNL), 315-338 (TKLE…FWNL), 340-363 (RLRR…VLVN), and 364-387 (SSVR…PLSI). An N-linked (GlcNAc...) asparagine glycan is attached at asparagine 213. N-linked (GlcNAc...) asparagine glycosylation is present at asparagine 313. Residue asparagine 363 is glycosylated (N-linked (GlcNAc...) asparagine). The stretch at 388–407 (NLLSAWNNSFTGNIPLETCN) is one LRR 13; degenerate repeat. Asparagine 394, asparagine 407, and asparagine 420 each carry an N-linked (GlcNAc...) asparagine glycan. LRR repeat units follow at residues 408-434 (RSSL…DFQE), 436-456 (LIVV…IFSD), 457-481 (GALL…LLNC), 483-504 (MLRF…WLKA), 505-529 (LPDL…DRGP), 532-556 (FPKL…YFVN), 601-625 (LTSY…IGLL), 626-649 (KALI…LANV), 650-673 (TELE…LKTL), and 675-698 (FLAY…QITG). Asparagine 480 carries an N-linked (GlcNAc...) asparagine glycan. Residue asparagine 544 is glycosylated (N-linked (GlcNAc...) asparagine). Residues asparagine 632 and asparagine 648 are each glycosylated (N-linked (GlcNAc...) asparagine). A helical transmembrane segment spans residues 741 to 761 (AVVIGYWPGLLLGLIMAHVIA). The Cytoplasmic portion of the chain corresponds to 762–808 (SFKPKWLVKIVGPEKRKEDNPVRLFMTLDSRWDSFNNKKNVEQKSDM).

Belongs to the RLP family.

Its subcellular location is the cell membrane. The sequence is that of Receptor like protein 27 from Arabidopsis thaliana (Mouse-ear cress).